We begin with the raw amino-acid sequence, 466 residues long: CCA-adding enzyme (466 aa).

Serine 55 and arginine 58 together coordinate ATP. Residues serine 55 and arginine 58 each coordinate CTP. Residues aspartate 67, aspartate 69, and aspartate 118 each coordinate Mg(2+). 3 residues coordinate ATP: histidine 141, lysine 161, and tyrosine 170. CTP-binding residues include histidine 141, lysine 161, and tyrosine 170.

It belongs to the tRNA nucleotidyltransferase/poly(A) polymerase family. Archaeal CCA-adding enzyme subfamily. Homodimer. It depends on Mg(2+) as a cofactor.

It carries out the reaction a tRNA precursor + 2 CTP + ATP = a tRNA with a 3' CCA end + 3 diphosphate. It catalyses the reaction a tRNA with a 3' CCA end + 2 CTP + ATP = a tRNA with a 3' CCACCA end + 3 diphosphate. In terms of biological role, catalyzes the addition and repair of the essential 3'-terminal CCA sequence in tRNAs without using a nucleic acid template. Adds these three nucleotides in the order of C, C, and A to the tRNA nucleotide-73, using CTP and ATP as substrates and producing inorganic pyrophosphate. tRNA 3'-terminal CCA addition is required both for tRNA processing and repair. Also involved in tRNA surveillance by mediating tandem CCA addition to generate a CCACCA at the 3' terminus of unstable tRNAs. While stable tRNAs receive only 3'-terminal CCA, unstable tRNAs are marked with CCACCA and rapidly degraded. The sequence is that of CCA-adding enzyme from Haloarcula marismortui (strain ATCC 43049 / DSM 3752 / JCM 8966 / VKM B-1809) (Halobacterium marismortui).